A 68-amino-acid chain; its full sequence is Protein SlyX homolog (68 aa).

This sequence belongs to the SlyX family.

This Pseudomonas putida (strain ATCC 700007 / DSM 6899 / JCM 31910 / BCRC 17059 / LMG 24140 / F1) protein is Protein SlyX homolog.